We begin with the raw amino-acid sequence, 581 residues long: Interleukin-22 receptor subunit alpha-1 (581 aa).

Residues 1–15 form the signal peptide; it reads MRTLLTILAAGSLLA. Topologically, residues 16-228 are extracellular; the sequence is HITEDTSDLL…VKTLPDRTWT (213 aa). 2 Fibronectin type-III domains span residues 18–115 and 141–221; these read TEDT…RFSS and PTYT…RVKT. A disulfide bond links C71 and C79. The N-linked (GlcNAc...) asparagine glycan is linked to N80. An intrachain disulfide couples C128 to C217. The helical transmembrane segment at 229–249 threads the bilayer; the sequence is YSFSGAFLFSLGFLVAGLCYL. The Cytoplasmic portion of the chain corresponds to 250–581; it reads SYRYITKPPP…GLALTVQWES (332 aa). Disordered stretches follow at residues 354–493 and 539–563; these read QAAP…SSLK and PSDEDPVSKTEAESPGLQAPDLESP. Residues 378-389 show a composition bias toward polar residues; it reads TPQAVSETQLPS. Phosphoserine is present on residues S410 and S414. Over residues 440–449 the composition is skewed to polar residues; that stretch reads CSPTGLSLQE.

This sequence belongs to the type II cytokine receptor family. In terms of assembly, heterodimer with IL10RB and with IL20RB. Interacts with FBXW12; the interaction promotes ubiquitination of IL22RA1. Ubiquitinated.

It is found in the cell membrane. Component of the receptor for IL20, IL22 and IL24. Component of IL22 receptor formed by IL22RA1 and IL10RB enabling IL22 signaling via JAK/STAT pathways. IL22 also induces activation of MAPK1/MAPK3 and Akt kinases pathways. Component of one of the receptor for IL20 and IL24 formed by IL22RA1 and IL20RB also signaling through STATs activation. Mediates IL24 antiangiogenic activity as well as IL24 inhibitory effect on endothelial cell tube formation and differentiation. The protein is Interleukin-22 receptor subunit alpha-1 (IL22RA1) of Bos taurus (Bovine).